A 297-amino-acid polypeptide reads, in one-letter code: TGF-beta receptor type-2 (297 aa).

An N-terminal signal peptide occupies residues 1–23; the sequence is MGRGLLGGLWPLHVVLWTRIAST. Topologically, residues 24-166 are extracellular; it reads IPPHVPKSVN…NPDLLLVIFQ (143 aa). Cystine bridges form between cysteine 51/cysteine 84, cysteine 54/cysteine 71, cysteine 61/cysteine 67, cysteine 77/cysteine 101, cysteine 121/cysteine 136, and cysteine 138/cysteine 143. Residues asparagine 70 and asparagine 94 are each glycosylated (N-linked (GlcNAc...) asparagine). Residues 167 to 187 form a helical membrane-spanning segment; that stretch reads VTGVSLLPPLGIAIAVIITFY. The Cytoplasmic portion of the chain corresponds to 188–297; it reads CYRVHRQQKL…KTEKDIFSDL (110 aa). The Protein kinase domain maps to 244 to 297; the sequence is IELDTLVGKGRFAEVYKAKLRQNTSEQFETVAVKIFPYEEYASWKTEKDIFSDL. ATP is bound by residues 250–258 and lysine 277; that span reads VGKGRFAEV.

It belongs to the protein kinase superfamily. TKL Ser/Thr protein kinase family. TGFB receptor subfamily. Homodimer. Heterohexamer; TGFB1, TGFB2 and TGFB3 homodimeric ligands assemble a functional receptor composed of two TGFBR1 and TGFBR2 heterodimers to form a ligand-receptor heterohexamer. The respective affinity of TGFRB1 and TGFRB2 for the ligands may modulate the kinetics of assembly of the receptor and may explain the different biological activities of TGFB1, TGFB2 and TGFB3. Component of a complex composed of TSC22D1 (via N-terminus), TGFBR1 and TGFBR2; the interaction between TSC22D1 and TGFBR1 is inhibited by SMAD7 and promoted by TGFB1. Interacts with DAXX. Interacts with DYNLT4. Interacts with ZFYVE9; ZFYVE9 recruits SMAD2 and SMAD3 to the TGF-beta receptor. Interacts with and is activated by SCUBE3; this interaction does not affect TGFB1-binding to TGFBR2. Interacts with VPS39; this interaction is independent of the receptor kinase activity and of the presence of TGF-beta. Interacts with CLU. It depends on Mg(2+) as a cofactor. Requires Mn(2+) as cofactor. Post-translationally, phosphorylated on a Ser/Thr residue in the cytoplasmic domain.

The protein localises to the cell membrane. The protein resides in the membrane raft. The catalysed reaction is L-threonyl-[receptor-protein] + ATP = O-phospho-L-threonyl-[receptor-protein] + ADP + H(+). It carries out the reaction L-seryl-[receptor-protein] + ATP = O-phospho-L-seryl-[receptor-protein] + ADP + H(+). Functionally, transmembrane serine/threonine kinase forming with the TGF-beta type I serine/threonine kinase receptor, TGFBR1, the non-promiscuous receptor for the TGF-beta cytokines TGFB1, TGFB2 and TGFB3. Transduces the TGFB1, TGFB2 and TGFB3 signal from the cell surface to the cytoplasm and is thus regulating a plethora of physiological and pathological processes including cell cycle arrest in epithelial and hematopoietic cells, control of mesenchymal cell proliferation and differentiation, wound healing, extracellular matrix production, immunosuppression and carcinogenesis. The formation of the receptor complex composed of 2 TGFBR1 and 2 TGFBR2 molecules symmetrically bound to the cytokine dimer results in the phosphorylation and the activation of TGFRB1 by the constitutively active TGFBR2. Activated TGFBR1 phosphorylates SMAD2 which dissociates from the receptor and interacts with SMAD4. The SMAD2-SMAD4 complex is subsequently translocated to the nucleus where it modulates the transcription of the TGF-beta-regulated genes. This constitutes the canonical SMAD-dependent TGF-beta signaling cascade. Also involved in non-canonical, SMAD-independent TGF-beta signaling pathways. The polypeptide is TGF-beta receptor type-2 (TGFBR2) (Sus scrofa (Pig)).